The sequence spans 243 residues: Undecaprenyl-phosphate mannosyltransferase (243 aa).

The protein belongs to the glycosyltransferase 2 family.

The enzyme catalyses di-trans,octa-cis-undecaprenyl phosphate + GDP-alpha-D-mannose = D-mannosyl di-trans,octa-cis-undecaprenyl phosphate + GDP. In terms of biological role, catalyzes the transfer of mannose from GDP-mannose to D-mannosyl-1-phosphoundecaprenol. The protein is Undecaprenyl-phosphate mannosyltransferase of Micrococcus luteus (strain ATCC 4698 / DSM 20030 / JCM 1464 / CCM 169 / CCUG 5858 / IAM 1056 / NBRC 3333 / NCIMB 9278 / NCTC 2665 / VKM Ac-2230) (Micrococcus lysodeikticus).